Consider the following 83-residue polypeptide: Putative protein T-ENOL (83 aa).

Residues 1–33 (MASTPMGNEGEKKSSWPSQAAPSLRGGPASLSR) form a disordered region.

In Homo sapiens (Human), this protein is Putative protein T-ENOL.